We begin with the raw amino-acid sequence, 134 residues long: Interleukin-5 (134 aa).

The signal sequence occupies residues 1-19 (MRMLLHLSLLALGAAYVYA). O-linked (GalNAc...) threonine glycosylation is present at Thr22. N-linked (GlcNAc...) asparagine glycosylation occurs at Asn47.

The protein belongs to the IL-5 family. Homodimer; disulfide-linked. Interacts with IL5RA. Interacts with CSF2RB. In terms of tissue distribution, present in peripheral blood mononuclear cells.

The protein localises to the secreted. Functionally, homodimeric cytokine expressed predominantly by T-lymphocytes and NK cells that plays an important role in the survival, differentiation, and chemotaxis of eosinophils. Also acts on activated and resting B-cells to induce immunoglobulin production, growth, and differentiation. Mechanistically, exerts its biological effects through a receptor composed of IL5RA subunit and the cytokine receptor common subunit beta/CSF2RB. Binding to the receptor leads to activation of various kinases including LYN, SYK and JAK2 and thereby propagates signals through the RAS-MAPK and JAK-STAT5 pathways respectively. The chain is Interleukin-5 (IL5) from Homo sapiens (Human).